Consider the following 132-residue polypeptide: Agouti-signaling protein (132 aa).

Positions 1-22 (MDVTRLLLATLLVFLCFFTAYS) are cleaved as a signal peptide. Asn39 carries an N-linked (GlcNAc...) asparagine glycan. A disordered region spans residues 61-87 (QISRKEAEKKRSSKKEASMKKVARPRT). Over residues 63-79 (SRKEAEKKRSSKKEASM) the composition is skewed to basic and acidic residues. Intrachain disulfides connect Cys93/Cys108, Cys100/Cys114, Cys107/Cys125, Cys111/Cys132, and Cys116/Cys123. In terms of domain architecture, Agouti spans 93 to 132 (CVATRDSCKPPAPACCDPCAFCQCRFFRSACSCRVLSLNC).

It localises to the secreted. Functionally, involved in the regulation of melanogenesis. The binding of ASP to MC1R precludes alpha-MSH initiated signaling and thus blocks production of cAMP, leading to a down-regulation of eumelanogenesis (brown/black pigment) and thus increasing synthesis of pheomelanin (yellow/red pigment). The polypeptide is Agouti-signaling protein (ASIP) (Macaca hecki (Heck's macaque)).